The chain runs to 202 residues: Snake venom metalloproteinase fibrolase (202 aa).

The 197-residue stretch at 6 to 202 folds into the Peptidase M12B domain; it reads RYIELVIVAD…HNPQCILNQP (197 aa). Glu9 contacts Ca(2+). N-linked (GlcNAc...) asparagine glycosylation occurs at Asn25. Asp93 lines the Ca(2+) pocket. Disulfide bonds link Cys117/Cys197, Cys157/Cys181, and Cys159/Cys164. His142 serves as a coordination point for Zn(2+). Residue Glu143 is part of the active site. Positions 146 and 152 each coordinate Zn(2+). 2 residues coordinate Ca(2+): Cys197 and Asn200.

The protein belongs to the venom metalloproteinase (M12B) family. P-I subfamily. In terms of assembly, monomer. Zn(2+) is required as a cofactor. Post-translationally, glycosylated. Expressed by the venom gland.

The protein localises to the secreted. The catalysed reaction is Hydrolysis of 14-Ala-|-Leu-15 in insulin B chain and 413-Lys-|-Leu-414 in alpha-chain of fibrinogen.. Activated by calcium and magnesium ions. Inhibited by EDTA, DTT and L-cysteine. Activity is not affected by PMSF or heparin. Its function is as follows. Has fibrino(geno)lytic activity on the alpha and beta chains of fibrinogen (FGA and FGB). Inhibits human ADP- and collagen-induced platelet aggregation on platelet-rich plasma but does not affect the thrombin-induced aggregation of rabbit washed platelets. Slightly degrades plasminogen. The sequence is that of Snake venom metalloproteinase fibrolase from Macrovipera lebetinus (Levantine viper).